A 358-amino-acid chain; its full sequence is Putative zinc metalloprotease RC0203 (358 aa).

Histidine 18 contacts Zn(2+). Residue glutamate 19 is part of the active site. Zn(2+) is bound at residue histidine 22. 4 helical membrane-spanning segments follow: residues 52–71 (GVRW…IYGY), 97–119 (FLIV…AGFY), 285–307 (YLLF…IPVL), and 332–351 (ILLQ…AVSN). Positions 102–186 (AGPLINYLLA…STLTIERKSE (85 aa)) constitute a PDZ domain.

The protein belongs to the peptidase M50B family. The cofactor is Zn(2+).

It localises to the cell inner membrane. The chain is Putative zinc metalloprotease RC0203 from Rickettsia conorii (strain ATCC VR-613 / Malish 7).